The primary structure comprises 455 residues: Gamma-glutamyl phosphate reductase (455 aa).

It belongs to the gamma-glutamyl phosphate reductase family.

It is found in the cytoplasm. It carries out the reaction L-glutamate 5-semialdehyde + phosphate + NADP(+) = L-glutamyl 5-phosphate + NADPH + H(+). It participates in amino-acid biosynthesis; L-proline biosynthesis; L-glutamate 5-semialdehyde from L-glutamate: step 2/2. Catalyzes the NADPH-dependent reduction of L-glutamate 5-phosphate into L-glutamate 5-semialdehyde and phosphate. The product spontaneously undergoes cyclization to form 1-pyrroline-5-carboxylate. The sequence is that of Gamma-glutamyl phosphate reductase from Synechococcus sp. (strain JA-2-3B'a(2-13)) (Cyanobacteria bacterium Yellowstone B-Prime).